Consider the following 875-residue polypeptide: Receptor-like protein 33 (875 aa).

The first 23 residues, 1-23, serve as a signal peptide directing secretion; the sequence is MSLIPITFYFLFLFFSNFRGVFA. Over 24-822 the chain is Extracellular; that stretch reads VPNIHLCHFE…GESETLESEQ (799 aa). N-linked (GlcNAc...) asparagine glycosylation is found at Asn65, Asn103, Asn133, Asn146, and Asn181. LRR repeat units follow at residues 110-133, 134-157, 159-182, 183-205, 206-230, 231-254, 256-278, 280-302, 303-327, and 329-351; these read FHFL…SIGN, LSHL…SLGN, FHLT…LGNL, SYLT…SFGS, LNQL…VINL, TKLS…ITSL, ILES…LFTI, SITL…NISS, PSNL…ISRL, and NLRT…IFSH. N-linked (GlcNAc...) asparagine glycans are attached at residues Asn229 and Asn250. Residue Asn299 is glycosylated (N-linked (GlcNAc...) asparagine). An LRR 11; degenerate repeat occupies 352–377; sequence LKLLGNLYLSHSNTTTTIDLNAVLSC. Asn364, Asn395, and Asn411 each carry an N-linked (GlcNAc...) asparagine glycan. LRR repeat units lie at residues 378 to 401, 404 to 427, 428 to 451, 455 to 477, 479 to 502, 503 to 528, 530 to 549, 550 to 573, 575 to 596, 597 to 619, 620 to 643, 686 to 710, 711 to 734, 735 to 758, and 760 to 783; these read FKML…SVSD, LGLI…LRTQ, RQMR…LLLQ, MHIS…TVVP, PSMK…ICSL, RSLI…KFKS, LSDL…KTII, KSLR…LIHF, TLEV…WLSS, LKKL…KTRF, PKLR…CFVE, LKIY…IGLL, KELH…MGNL, RELE…LGNL, and YLAY…QFRT. N-linked (GlcNAc...) asparagine glycosylation is found at Asn490 and Asn514. The N-linked (GlcNAc...) asparagine glycan is linked to Asn587. A glycan (N-linked (GlcNAc...) asparagine) is linked at Asn633. Residues Asn717, Asn757, and Asn765 are each glycosylated (N-linked (GlcNAc...) asparagine). The chain crosses the membrane as a helical span at residues 823–843; that stretch reads VLSWIAAAIGFTPGIVLGLTI. Over 844-875 the chain is Cytoplasmic; sequence GHIVLSSKPRWFFKVLYINNSRRRRRTRSEKS.

It belongs to the RLP family.

Its subcellular location is the cell membrane. This chain is Receptor-like protein 33, found in Arabidopsis thaliana (Mouse-ear cress).